A 358-amino-acid polypeptide reads, in one-letter code: 3'(2'),5'-bisphosphate nucleotidase (358 aa).

Asp-52 serves as the catalytic Proton acceptor. Glu-78, Asp-140, Ile-142, and Asp-143 together coordinate Mg(2+). The active-site Proton acceptor is the Thr-145. Thr-145, His-239, Ser-263, Lys-266, Arg-280, and Asp-292 together coordinate adenosine 3',5'-bisphosphate. AMP-binding residues include His-239, Ser-263, Lys-266, Arg-280, and Asp-292. Position 292 (Asp-292) interacts with Mg(2+).

Belongs to the inositol monophosphatase superfamily. Mg(2+) serves as cofactor. Is constitutively transcribed in both roots and shoots.

The enzyme catalyses 3'-phosphoadenylyl sulfate + H2O = adenosine 5'-phosphosulfate + phosphate. It catalyses the reaction adenosine 3',5'-bisphosphate + H2O = AMP + phosphate. It carries out the reaction adenosine 2',5'-bisphosphate + H2O = AMP + phosphate. Inhibited by Ca(2+), Li(+), and Na(+) and activated by K(+). Phosphatase that converts adenosine 3'-phosphate 5'-phosphosulfate (PAPS) to adenosine 5'-phosphosulfate (APS) and 3'(2')-phosphoadenosine 5'-phosphate (PAP) to AMP. May regulate the flux of sulfur in the sulfur-activation pathway by converting PAPS to APS. Shows no activity on myo-inositol 1-phosphate, beta-glycerol phosphate, NADPH, NADP and 5'-AMP. The sequence is that of 3'(2'),5'-bisphosphate nucleotidase from Oryza sativa (Rice).